Consider the following 549-residue polypeptide: MTLASIRRGYHVIKTLLQYGLDDVLPPKMTPWYFKLARNSLFWIRNKHKNKPGGERLKLAMQELGPVYIKLGQMLSTRRDLLSDEWASELAMLQDKVPPFDGALARQAIEAELKAPIESLFDDFNETPLASASISQVHTATLKSNGKDVVLKVLRPNVETKIQADLQLMSQTAKLIEYLLGEGNRLRPAEVIEDYRVTILGELNLKLEALNAVKLRNNFLDSDALYVPYVYEEFCYPRLMVMERIYGISVSDIAALKAQGTNFKLLAERGVELFFTQVFRDNFFHADMHPGNIFISRDHPENPYYIGLDCGIMGTLSEVDKRYLAENFLAFFNRDYHRIAQLYIESGWVSEKTDLQAFEQAIKVVCEPMFNKPLDEISFGHVLLELFRTARHFDIVVQPQLVLLEKTLLYIEGLGRQLYPQLDLWQTAKPFLEQWMADQVGPKAMFKKVSTKLPYWADKLPEFPELIYDNLKLGRKLLSSQQQMLDKYLKYQQQAHKSNYLLITSAVLLICGTLLINRDATLWTPYVCLVSGIILWFVGWRSRPKNRKF.

Residues 123–501 (DFNETPLASA…QQQAHKSNYL (379 aa)) enclose the Protein kinase domain. ATP contacts are provided by residues 129–137 (LASASISQV) and Lys152. The active-site Proton acceptor is the Asp287. The next 2 membrane-spanning stretches (helical) occupy residues 496–516 (HKSN…TLLI) and 520–540 (ATLW…FVGW).

The protein belongs to the ABC1 family. UbiB subfamily.

It localises to the cell inner membrane. Its pathway is cofactor biosynthesis; ubiquinone biosynthesis [regulation]. Is probably a protein kinase regulator of UbiI activity which is involved in aerobic coenzyme Q (ubiquinone) biosynthesis. The chain is Probable protein kinase UbiB from Shewanella baltica (strain OS185).